Reading from the N-terminus, the 537-residue chain is MFS-type transporter qa-x (537 aa).

Residues 1–26 lie on the Cytoplasmic side of the membrane; that stretch reads MTLLALKEDRPTPKAVYNWRVYTCAA. A helical membrane pass occupies residues 27 to 47; that stretch reads IASFASCMIGYDSAFIGTTLA. At 48–74 the chain is on the extracellular side; the sequence is LPSFTKEFDFASYTPGALALLQSNIVS. A helical transmembrane segment spans residues 75–95; the sequence is VYQAGAFFGCLFAYATSYFLG. Residues 96 to 98 lie on the Cytoplasmic side of the membrane; sequence RRK. The helical transmembrane segment at 99-119 threads the bilayer; that stretch reads SLIAFSVVFIIGAAIMLAADG. Residues 120 to 131 are Extracellular-facing; that stretch reads QGRGIDPIIAGR. A helical transmembrane segment spans residues 132-152; that stretch reads VLAGIGVGGASNMVPIYISEL. The Cytoplasmic segment spans residues 153–160; it reads APPAVRGR. A helical membrane pass occupies residues 161–181; that stretch reads LVGIYELGWQIGGLVGFWINY. Topologically, residues 182–195 are extracellular; it reads GVNTTMAPTRSQWL. N-linked (GlcNAc...) asparagine glycosylation occurs at asparagine 184. A helical transmembrane segment spans residues 196 to 216; the sequence is IPFAVQLIPAGLLFLGSFWIP. The Cytoplasmic portion of the chain corresponds to 217-285; sequence ESPRWLYANG…SLKQRKVQWR (69 aa). The chain crosses the membrane as a helical span at residues 286 to 306; the sequence is FFLGGMLFFWQNGSGINAINY. Residues 307–327 lie on the Extracellular side of the membrane; the sequence is YSPTVFRSIGITGTDTGFLTT. Residues 328-349 form a helical membrane-spanning segment; that stretch reads GIFGVVKMVLTIIWLLWLVDLV. The Cytoplasmic portion of the chain corresponds to 350-352; it reads GRR. A helical membrane pass occupies residues 353–373; that stretch reads RILFIGAAGGSLCMWFIGAYI. Topologically, residues 374 to 389 are extracellular; that stretch reads KIADPGSNKAEDAKLT. The chain crosses the membrane as a helical span at residues 390–410; that stretch reads SGGIAAIFFFYLWTAFYTPSW. Over 411–435 the chain is Cytoplasmic; sequence NGTPWVINSEMFDQNTRSLGQASAA. The helical transmembrane segment at 436–456 threads the bilayer; the sequence is ANNWFWNFIISRFTPQMFIKM. Residues 457 to 458 are Extracellular-facing; that stretch reads EY. A helical transmembrane segment spans residues 459–479; the sequence is GVYFFFASLMLLSIVFIYFFL. Residues 480 to 537 are Cytoplasmic-facing; the sequence is PETKSIPLEAMDRLFEIKPVQNANKNLMAELNFDRNPEREESSSLDDKDRVTQTENAV. The span at 514 to 531 shows a compositional bias: basic and acidic residues; it reads RNPEREESSSLDDKDRVT. Positions 514–537 are disordered; it reads RNPEREESSSLDDKDRVTQTENAV.

The protein belongs to the major facilitator superfamily. Sugar transporter (TC 2.A.1.1) family.

It localises to the membrane. Its function is as follows. MFS-type transporter; part of the qa gene cluster that mediates the catabolism of quinic acid (QA) and as such, allows the use of QA as a sole carbon source. Involved in the upatke of QA. The qa cluster encodes 3 inducible enymes (qa-2, qa-3 and qa-4) catalyzing the first three reactions in the catabolism of quinic acid to protocatechuic acid (also known as 3,4-Dihydroxybenzoic acid). The sequence is that of MFS-type transporter qa-x from Neurospora crassa (strain ATCC 24698 / 74-OR23-1A / CBS 708.71 / DSM 1257 / FGSC 987).